We begin with the raw amino-acid sequence, 209 residues long: Glutathione S-transferase 2 (209 aa).

Residues 1-81 (MLDFYYLPGS…YLCDQYGDED (81 aa)) enclose the GST N-terminal domain. Residues Ser-10, 51-53 (RTI), and 65-67 (ESR) each bind glutathione. The GST C-terminal domain occupies 88-209 (DTIQRAIVNQ…SGAKEFLTYK (122 aa)).

It belongs to the GST superfamily. Theta family. Homodimer.

It carries out the reaction RX + glutathione = an S-substituted glutathione + a halide anion + H(+). Conjugation of reduced glutathione to a wide number of exogenous and endogenous hydrophobic electrophiles. In Anopheles gambiae (African malaria mosquito), this protein is Glutathione S-transferase 2 (GstD2).